A 109-amino-acid chain; its full sequence is ATP-dependent Clp protease adapter protein ClpS (109 aa).

A disordered region spans residues 1-23; that stretch reads MTERKHDDTGVEEGTGLATKTRP.

It belongs to the ClpS family. In terms of assembly, binds to the N-terminal domain of the chaperone ClpA.

In terms of biological role, involved in the modulation of the specificity of the ClpAP-mediated ATP-dependent protein degradation. This chain is ATP-dependent Clp protease adapter protein ClpS, found in Maricaulis maris (strain MCS10) (Caulobacter maris).